We begin with the raw amino-acid sequence, 126 residues long: Thioredoxin domain-containing protein, mitochondrial (126 aa).

In terms of domain architecture, Thioredoxin spans 14–120; it reads SQKIATNTSF…ILEFLNHIET (107 aa).

The protein belongs to the thioredoxin family.

The protein localises to the mitochondrion. The sequence is that of Thioredoxin domain-containing protein, mitochondrial from Dictyostelium discoideum (Social amoeba).